Reading from the N-terminus, the 245-residue chain is Biosynthetic peptidoglycan transglycosylase (245 aa).

A helical transmembrane segment spans residues 20 to 42; that stretch reads VYAGSVFAGAWLATQLFYLAQIA.

Belongs to the glycosyltransferase 51 family.

It localises to the cell inner membrane. It carries out the reaction [GlcNAc-(1-&gt;4)-Mur2Ac(oyl-L-Ala-gamma-D-Glu-L-Lys-D-Ala-D-Ala)](n)-di-trans,octa-cis-undecaprenyl diphosphate + beta-D-GlcNAc-(1-&gt;4)-Mur2Ac(oyl-L-Ala-gamma-D-Glu-L-Lys-D-Ala-D-Ala)-di-trans,octa-cis-undecaprenyl diphosphate = [GlcNAc-(1-&gt;4)-Mur2Ac(oyl-L-Ala-gamma-D-Glu-L-Lys-D-Ala-D-Ala)](n+1)-di-trans,octa-cis-undecaprenyl diphosphate + di-trans,octa-cis-undecaprenyl diphosphate + H(+). Its pathway is cell wall biogenesis; peptidoglycan biosynthesis. In terms of biological role, peptidoglycan polymerase that catalyzes glycan chain elongation from lipid-linked precursors. This chain is Biosynthetic peptidoglycan transglycosylase, found in Burkholderia lata (strain ATCC 17760 / DSM 23089 / LMG 22485 / NCIMB 9086 / R18194 / 383).